The sequence spans 712 residues: MTTIWEHCVDVDGEVAASTGCFTTLPIRIHRRNDIADDATKQSIHDWGAYVGDGWEQRSGSSWSPVGNWGAFIFPESLPDRLGVITYLANMGNIHDDLCDELPFEEALKEHSNLSQAMEVSNSDTRQCSKASDRSMKMKKYISKCLLEAMEIDRARALRMINSYRSKWLDVMESQNVNDMQTLEEYLAFRNLNGGMEAFWSMVEFGMAIDISESEKTHTRPLFQAAESALVLTNDYWSWDREWRLAQRTQDPRIVNAVHLFMRTEGLSVDQAREKVRERIVDYEREYLRLKEEFYTQNPNLPLYLRRYVEVCGVITAGNHYWCANCPRHHAWRDEESSPSERSFSPSNEGIEDPRLSPGASTTSSMSQKSSPATEITLSDVLGFMAINDNHKPQRSSDMALMAPVQYIRSMPSKGLRSLMVEALDQWLLVDDPELEQIKNIIDLLHNSSLILDDIEDDSPLRRGLPATHTVFGQAQSINSANFMFVQAVQMTQKLNNPASLDTLLDELECLFIGQSWDLYWKFHLQVPTEKEYLEMVDCKTGAMFRLLARLMFHESSVVSGTQVLQLLDEMCRLFGRFFQIRDDFMNLYSTEYSDQKGFCEDLDEGKMSYPLIMLLWQNPGQRDQIMGIFRQQASNTSRGPTSDRSRLPLETKRYVMSLLKGSDIMASTLRKLRDLEAAVDYSISGLEKALGDANPVMRIVLSRLSVRDVSL.

Residues 1-332 form a terpene cyclase region; it reads MTTIWEHCVD…CANCPRHHAW (332 aa). Residue aspartate 96 coordinates Mg(2+). Substrate contacts are provided by residues aspartate 96, asparagine 234, 238-242, and 328-329; these read SWDRE and RH. A DDXXD 1 motif is present at residues 96-100; it reads DDLCD. The NSE/DTE motif lies at 234 to 242; it reads NDYWSWDRE. Residues 333 to 706 are prenyltransferase; the sequence is RDEESSPSER…VMRIVLSRLS (374 aa). Residues 334–373 form a disordered region; sequence DEESSPSERSFSPSNEGIEDPRLSPGASTTSSMSQKSSPA. Composition is skewed to low complexity over residues 340–349 and 361–373; these read SERSFSPSNE and STTS…SSPA. Lysine 414, arginine 417, and histidine 446 together coordinate isopentenyl diphosphate. Positions 453 and 457 each coordinate Mg(2+). The short motif at 453–457 is the DDXXD 2 element; it reads DDIED. Residue arginine 462 participates in dimethylallyl diphosphate binding. Arginine 463 contacts isopentenyl diphosphate. Residues lysine 540, threonine 541, glutamine 580, asparagine 587, lysine 597, and lysine 607 each coordinate dimethylallyl diphosphate.

The protein in the N-terminal section; belongs to the terpene synthase family. It in the C-terminal section; belongs to the FPP/GGPP synthase family. In terms of assembly, hexamer. Mg(2+) is required as a cofactor.

It carries out the reaction isopentenyl diphosphate + (2E,6E)-farnesyl diphosphate = (2E,6E,10E)-geranylgeranyl diphosphate + diphosphate. It catalyses the reaction isopentenyl diphosphate + (2E,6E,10E)-geranylgeranyl diphosphate = (2E,6E,10E,14E)-geranylfarnesyl diphosphate + diphosphate. It participates in secondary metabolite biosynthesis; terpenoid biosynthesis. Its function is as follows. Bifunctional terpene synthase; part of the gene cluster that mediates the biosynthesis of betaestacins. The bifunctional terpene synthase btcA converts isopentenyl diphosphate (IPP) and dimethylallyl diphosphate (DMAPP) into the sesterterpene betaestacin I. The C-terminal prenyltransferase (PT) domain of btcA catalyzes formation of GFPP, whereas the N-terminal terpene cyclase (TC) domain catalyzes the cyclization of GFPP into betaestacin I. The cytochrome P450 monooxygenase btcB oxidizes the C25 methyl group of betaestacin I to yield the carboxylic acid betaestacin IV via the alcohol betaestacin III. The cytochrome P450 monooxygenase btcC further catalyzes the multistep oxidation of betaestacin IV to produce several compounds, including betaestacins Va, Vb, Vc and VI. This chain is Sesterterpene synthase btcA, found in Colletotrichum orbiculare (strain 104-T / ATCC 96160 / CBS 514.97 / LARS 414 / MAFF 240422) (Cucumber anthracnose fungus).